The primary structure comprises 161 residues: Cyclic pyranopterin monophosphate synthase (161 aa).

Substrate is bound by residues 76–78 and 114–115; these read MCH and ME. The active site involves aspartate 129.

The protein belongs to the MoaC family. In terms of assembly, homohexamer; trimer of dimers.

The enzyme catalyses (8S)-3',8-cyclo-7,8-dihydroguanosine 5'-triphosphate = cyclic pyranopterin phosphate + diphosphate. The protein operates within cofactor biosynthesis; molybdopterin biosynthesis. Its function is as follows. Catalyzes the conversion of (8S)-3',8-cyclo-7,8-dihydroguanosine 5'-triphosphate to cyclic pyranopterin monophosphate (cPMP). The sequence is that of Cyclic pyranopterin monophosphate synthase from Clostridium acetobutylicum (strain ATCC 824 / DSM 792 / JCM 1419 / IAM 19013 / LMG 5710 / NBRC 13948 / NRRL B-527 / VKM B-1787 / 2291 / W).